The sequence spans 151 residues: Small ribosomal subunit protein uS15 (151 aa).

The segment covering 1-16 has biased composition (basic residues); it reads MPHRSRDKKGRSRSVR. A disordered region spans residues 1–20; it reads MPHRSRDKKGRSRSVRPAHP.

Belongs to the universal ribosomal protein uS15 family. Part of the 30S ribosomal subunit.

The chain is Small ribosomal subunit protein uS15 from Pyrobaculum aerophilum (strain ATCC 51768 / DSM 7523 / JCM 9630 / CIP 104966 / NBRC 100827 / IM2).